A 408-amino-acid chain; its full sequence is Imidazolonepropionase (408 aa).

Fe(3+) contacts are provided by H73 and H75. Zn(2+) is bound by residues H73 and H75. Residues R82, Y145, and H178 each coordinate 4-imidazolone-5-propanoate. Residue Y145 coordinates N-formimidoyl-L-glutamate. H243 is a binding site for Fe(3+). H243 contributes to the Zn(2+) binding site. Q246 provides a ligand contact to 4-imidazolone-5-propanoate. Residue D318 participates in Fe(3+) binding. Residue D318 participates in Zn(2+) binding. N-formimidoyl-L-glutamate contacts are provided by N320 and G322. Residue S323 coordinates 4-imidazolone-5-propanoate.

The protein belongs to the metallo-dependent hydrolases superfamily. HutI family. The cofactor is Zn(2+). Fe(3+) is required as a cofactor.

Its subcellular location is the cytoplasm. It carries out the reaction 4-imidazolone-5-propanoate + H2O = N-formimidoyl-L-glutamate. It functions in the pathway amino-acid degradation; L-histidine degradation into L-glutamate; N-formimidoyl-L-glutamate from L-histidine: step 3/3. Catalyzes the hydrolytic cleavage of the carbon-nitrogen bond in imidazolone-5-propanoate to yield N-formimidoyl-L-glutamate. It is the third step in the universal histidine degradation pathway. The sequence is that of Imidazolonepropionase from Shewanella sediminis (strain HAW-EB3).